Consider the following 199-residue polypeptide: Stress response protein SCP2 (199 aa).

The protein belongs to the CAPAB/TerDEXZ family.

The protein localises to the cytoplasm. This Bacillus subtilis (strain 168) protein is Stress response protein SCP2 (yceC).